Reading from the N-terminus, the 483-residue chain is Aspartyl/glutamyl-tRNA(Asn/Gln) amidotransferase subunit B (483 aa).

It belongs to the GatB/GatE family. GatB subfamily. In terms of assembly, heterotrimer of A, B and C subunits.

It catalyses the reaction L-glutamyl-tRNA(Gln) + L-glutamine + ATP + H2O = L-glutaminyl-tRNA(Gln) + L-glutamate + ADP + phosphate + H(+). It carries out the reaction L-aspartyl-tRNA(Asn) + L-glutamine + ATP + H2O = L-asparaginyl-tRNA(Asn) + L-glutamate + ADP + phosphate + 2 H(+). Functionally, allows the formation of correctly charged Asn-tRNA(Asn) or Gln-tRNA(Gln) through the transamidation of misacylated Asp-tRNA(Asn) or Glu-tRNA(Gln) in organisms which lack either or both of asparaginyl-tRNA or glutaminyl-tRNA synthetases. The reaction takes place in the presence of glutamine and ATP through an activated phospho-Asp-tRNA(Asn) or phospho-Glu-tRNA(Gln). The polypeptide is Aspartyl/glutamyl-tRNA(Asn/Gln) amidotransferase subunit B (Anaeromyxobacter sp. (strain Fw109-5)).